Consider the following 181-residue polypeptide: Oligoribonuclease (181 aa).

An Exonuclease domain is found at 8-171 (LIWIDLEMTG…QDIQESIAEL (164 aa)). Tyrosine 129 is an active-site residue.

The protein belongs to the oligoribonuclease family.

The protein resides in the cytoplasm. In terms of biological role, 3'-to-5' exoribonuclease specific for small oligoribonucleotides. This chain is Oligoribonuclease, found in Shewanella sp. (strain MR-4).